The primary structure comprises 115 residues: Large ribosomal subunit protein bL19 (115 aa).

The protein belongs to the bacterial ribosomal protein bL19 family.

This protein is located at the 30S-50S ribosomal subunit interface and may play a role in the structure and function of the aminoacyl-tRNA binding site. This is Large ribosomal subunit protein bL19 from Citrobacter koseri (strain ATCC BAA-895 / CDC 4225-83 / SGSC4696).